Here is a 297-residue protein sequence, read N- to C-terminus: Guanylate kinase (297 aa).

One can recognise a Guanylate kinase-like domain in the interval Gly-4 to His-183. Gly-11–Gly-18 is a binding site for ATP. Residues Glu-204 to Phe-297 form a unknown region.

Belongs to the guanylate kinase family.

It localises to the cytoplasm. It catalyses the reaction GMP + ATP = GDP + ADP. Its function is as follows. Essential for recycling GMP and indirectly, cGMP. This Mycoplasma mycoides subsp. mycoides SC (strain CCUG 32753 / NCTC 10114 / PG1) protein is Guanylate kinase (gmk).